The chain runs to 209 residues: Uridine kinase (209 aa).

12-19 contacts ATP; sequence GGSGSGKT.

It belongs to the uridine kinase family.

The protein resides in the cytoplasm. It carries out the reaction uridine + ATP = UMP + ADP + H(+). The enzyme catalyses cytidine + ATP = CMP + ADP + H(+). It functions in the pathway pyrimidine metabolism; CTP biosynthesis via salvage pathway; CTP from cytidine: step 1/3. It participates in pyrimidine metabolism; UMP biosynthesis via salvage pathway; UMP from uridine: step 1/1. The sequence is that of Uridine kinase from Streptococcus mutans serotype c (strain ATCC 700610 / UA159).